Reading from the N-terminus, the 61-residue chain is uncharacterized protein (61 aa).

Residues 23–61 (VPTKWQDYKKPGPNQKYTSDGKKRRRIRRSQKSILGVRS) form a disordered region. The span at 44 to 53 (KKRRRIRRSQ) shows a compositional bias: basic residues.

This is an uncharacterized protein from Archaeoglobus fulgidus (strain ATCC 49558 / DSM 4304 / JCM 9628 / NBRC 100126 / VC-16).